A 293-amino-acid polypeptide reads, in one-letter code: Ribosomal protein L11 methyltransferase (293 aa).

T145, G166, D188, and N230 together coordinate S-adenosyl-L-methionine.

This sequence belongs to the methyltransferase superfamily. PrmA family.

It localises to the cytoplasm. The enzyme catalyses L-lysyl-[protein] + 3 S-adenosyl-L-methionine = N(6),N(6),N(6)-trimethyl-L-lysyl-[protein] + 3 S-adenosyl-L-homocysteine + 3 H(+). Its function is as follows. Methylates ribosomal protein L11. The sequence is that of Ribosomal protein L11 methyltransferase from Actinobacillus pleuropneumoniae serotype 7 (strain AP76).